Reading from the N-terminus, the 278-residue chain is Protoheme IX farnesyltransferase (278 aa).

The next 9 helical transmembrane spans lie at 12–32 (VIWL…GTVD), 36–56 (LAAL…FNHY), 72–92 (PLPA…ALSA), 105–124 (LPGV…YTVW), 130–150 (WLNI…GYAL), 157–177 (LPAV…IWAL), 204–224 (AIIS…YLVF), 228–248 (LPGL…SALA), and 257–277 (MWRM…ALVF).

This sequence belongs to the UbiA prenyltransferase family. Protoheme IX farnesyltransferase subfamily.

It localises to the cell membrane. The enzyme catalyses heme b + (2E,6E)-farnesyl diphosphate + H2O = Fe(II)-heme o + diphosphate. The protein operates within porphyrin-containing compound metabolism; heme O biosynthesis; heme O from protoheme: step 1/1. Functionally, converts heme B (protoheme IX) to heme O by substitution of the vinyl group on carbon 2 of heme B porphyrin ring with a hydroxyethyl farnesyl side group. This is Protoheme IX farnesyltransferase from Pyrobaculum neutrophilum (strain DSM 2338 / JCM 9278 / NBRC 100436 / V24Sta) (Thermoproteus neutrophilus).